Reading from the N-terminus, the 292-residue chain is Leucine-rich repeat-containing protein 10B (292 aa).

The interval 1–20 (MGIAESTPDELPSDAEEQLR) is disordered. Residues 7 to 16 (TPDELPSDAE) show a composition bias toward acidic residues. LRR repeat units follow at residues 22–43 (GDQQ…VCAL), 45–66 (RLQK…IEEL), 68–90 (ELRI…CRLP), 91–112 (RLTR…FAQL), 114–136 (SLRC…LRLV), 137–158 (ALQS…LPRM), 160–181 (GLRG…LLRM), 183–204 (RLHI…HPLR), and 205–226 (ALRV…ADTV). The segment at 236-261 (RMAERDEPTPRPPPRRPARAFEDEEE) is disordered.

The protein is Leucine-rich repeat-containing protein 10B (LRRC10B) of Homo sapiens (Human).